We begin with the raw amino-acid sequence, 1148 residues long: Transcription-repair-coupling factor (1148 aa).

One can recognise a Helicase ATP-binding domain in the interval 615 to 776 (DMCQPLAMDR…MSGMRDLSII (162 aa)). ATP is bound at residue 628–635 (GDVGFGKT). The short motif at 729–732 (DEEH) is the DEEH box element. One can recognise a Helicase C-terminal domain in the interval 798–951 (VREAILREIL…GFALATHDLE (154 aa)).

In the N-terminal section; belongs to the UvrB family. This sequence in the C-terminal section; belongs to the helicase family. RecG subfamily. As to quaternary structure, monomer. Interacts with UvrA and RNAP.

It is found in the cytoplasm. In terms of biological role, couples transcription and DNA repair by recognizing RNA polymerase (RNAP) stalled at DNA lesions. Mediates ATP-dependent release of RNAP and its truncated transcript from the DNA, and recruitment of nucleotide excision repair machinery to the damaged site. Can also dissociate RNAP that is blocked by low concentration of nucleoside triphosphates or by physical obstruction, such as bound proteins. In addition, can rescue arrested complexes by promoting forward translocation. Has ATPase activity, which is required for removal of stalled RNAP, but seems to lack helicase activity. May act through a translocase activity that rewinds upstream DNA, leading either to translocation or to release of RNAP when the enzyme active site cannot continue elongation. This chain is Transcription-repair-coupling factor, found in Escherichia coli (strain K12).